The primary structure comprises 384 residues: Carbazole 1,9a-dioxygenase, terminal oxygenase component CarAa (384 aa).

One can recognise a Rieske domain in the interval 29–135 (WYPVMFSKEI…VQEAKGCVFI (107 aa)). [2Fe-2S] cluster-binding residues include Cys-69, His-71, Cys-90, and His-93.

Homotrimer. Carbazole 1,9a-dioxygenase complex consists of a terminal oxygenase component CarAa, a ferredoxin reductase component CarAd and a ferredoxin component CarAc. [2Fe-2S] cluster is required as a cofactor.

The catalysed reaction is 9H-carbazole + NADH + O2 + H(+) = 2'-aminobiphenyl-2,3-diol + NAD(+). The enzyme catalyses 9H-carbazole + NADPH + O2 + H(+) = 2'-aminobiphenyl-2,3-diol + NADP(+). Part of the multicomponent carbazole 1,9a-dioxygenase (CARDO), that converts carbazole (CAR) into 2-aminobiphenyl-2,3-diol. Catalyzes the dioxygenation at the angular (C-9a) and adjacent (C-1) positions of carbazole to yield a highly unstable cis-hydrodiol intermediate which is spontaneously converted to 2-aminobiphenyl-2,3-diol. It is also able to attack the angular position adjacent of hetero atom of heterocyclic aromatic compounds such as polychlorinated dibenzo-p-dioxin (DD) and dibenzofuran (DBF). It was also shown that CARDO has the ability to metabolize biphenyl and polycyclic aromatic hydrocarbons, such as naphthalene and phenanthrene. The chain is Carbazole 1,9a-dioxygenase, terminal oxygenase component CarAa (carAa) from Metapseudomonas resinovorans (Pseudomonas resinovorans).